A 647-amino-acid chain; its full sequence is Threonine--tRNA ligase (647 aa).

The 61-residue stretch at 1–61 (MIKITFPDGA…EEDGSIEIVT (61 aa)) folds into the TGS domain. Residues 240–538 (DHRKLGKELD…LIETYKGAFP (299 aa)) are catalytic. C334, H385, and H515 together coordinate Zn(2+).

The protein belongs to the class-II aminoacyl-tRNA synthetase family. As to quaternary structure, homodimer. Requires Zn(2+) as cofactor.

It localises to the cytoplasm. The catalysed reaction is tRNA(Thr) + L-threonine + ATP = L-threonyl-tRNA(Thr) + AMP + diphosphate + H(+). Functionally, catalyzes the attachment of threonine to tRNA(Thr) in a two-step reaction: L-threonine is first activated by ATP to form Thr-AMP and then transferred to the acceptor end of tRNA(Thr). Also edits incorrectly charged L-seryl-tRNA(Thr). The sequence is that of Threonine--tRNA ligase from Streptococcus pyogenes serotype M3 (strain ATCC BAA-595 / MGAS315).